The following is a 715-amino-acid chain: Polyribonucleotide nucleotidyltransferase (715 aa).

Residues Asp-493 and Asp-499 each contribute to the Mg(2+) site. The 60-residue stretch at 560-619 (PRMITIKINPEKIRDVIGKGGSVIRALTEETGTTIDISDDGVVTIASTSSEGMAEAKKRI) folds into the KH domain. The S1 motif domain occupies 629–697 (GQVYEGTVLK…EKGRVRLSAK (69 aa)).

Belongs to the polyribonucleotide nucleotidyltransferase family. The cofactor is Mg(2+).

Its subcellular location is the cytoplasm. The catalysed reaction is RNA(n+1) + phosphate = RNA(n) + a ribonucleoside 5'-diphosphate. Its function is as follows. Involved in mRNA degradation. Catalyzes the phosphorolysis of single-stranded polyribonucleotides processively in the 3'- to 5'-direction. The polypeptide is Polyribonucleotide nucleotidyltransferase (Burkholderia vietnamiensis (strain G4 / LMG 22486) (Burkholderia cepacia (strain R1808))).